The sequence spans 368 residues: N-acetylneuraminate epimerase (368 aa).

The N-terminal stretch at 1–19 (MNKTIMALAIMMASFAANA) is a signal peptide. Kelch repeat units lie at residues 40 to 84 (TVYI…AFID), 86 to 137 (NLYV…FVHN), 139 to 173 (KAYV…KINA), 174 to 219 (HYFD…VNKG), 222 to 265 (TWLI…VAGG), 287 to 336 (ENYQ…PWNN), and 338 to 367 (LLII…VTVQ). Glutamate 228 acts as the Proton acceptor in catalysis.

The protein belongs to the NanM family. In terms of assembly, homodimer.

The protein resides in the periplasm. The catalysed reaction is N-acetyl-alpha-neuraminate = N-acetyl-beta-neuraminate. Converts alpha-N-acetylneuranimic acid (Neu5Ac) to the beta-anomer, accelerating the equilibrium between the alpha- and beta-anomers. Probably facilitates sialidase-negative bacteria to compete successfully for limited amounts of extracellular Neu5Ac, which is likely taken up in the beta-anomer. In addition, the rapid removal of sialic acid from solution might be advantageous to the bacterium to damp down host responses. This Shigella flexneri serotype 5b (strain 8401) protein is N-acetylneuraminate epimerase.